A 162-amino-acid chain; its full sequence is Transcriptional repressor NrdR (162 aa).

The segment at 1–21 (MNCPDCGDEQTRVIDTETSAD) is disordered. A zinc finger lies at 3 to 34 (CPDCGDEQTRVIDTETSADGTSVRRRRECQRC). The ATP-cone domain occupies 49-139 (LQVKKRNGTI…VYKAFSEPQE (91 aa)).

It belongs to the NrdR family. Zn(2+) serves as cofactor.

Its function is as follows. Negatively regulates transcription of bacterial ribonucleotide reductase nrd genes and operons by binding to NrdR-boxes. The polypeptide is Transcriptional repressor NrdR (Halorubrum lacusprofundi (strain ATCC 49239 / DSM 5036 / JCM 8891 / ACAM 34)).